The chain runs to 193 residues: ATP-dependent Clp protease proteolytic subunit (193 aa).

Ser98 (nucleophile) is an active-site residue. The active site involves His123.

Belongs to the peptidase S14 family. In terms of assembly, fourteen ClpP subunits assemble into 2 heptameric rings which stack back to back to give a disk-like structure with a central cavity, resembling the structure of eukaryotic proteasomes.

The protein localises to the cytoplasm. The catalysed reaction is Hydrolysis of proteins to small peptides in the presence of ATP and magnesium. alpha-casein is the usual test substrate. In the absence of ATP, only oligopeptides shorter than five residues are hydrolyzed (such as succinyl-Leu-Tyr-|-NHMec, and Leu-Tyr-Leu-|-Tyr-Trp, in which cleavage of the -Tyr-|-Leu- and -Tyr-|-Trp bonds also occurs).. Functionally, cleaves peptides in various proteins in a process that requires ATP hydrolysis. Has a chymotrypsin-like activity. Plays a major role in the degradation of misfolded proteins. The sequence is that of ATP-dependent Clp protease proteolytic subunit from Pasteurella multocida (strain Pm70).